The primary structure comprises 2264 residues: Protein Ycf2 (2264 aa).

1611–1618 (GSIGTGRS) lines the ATP pocket.

This sequence belongs to the Ycf2 family.

The protein localises to the plastid. It is found in the chloroplast stroma. Probable ATPase of unknown function. Its presence in a non-photosynthetic plant (Epifagus virginiana) and experiments in tobacco indicate that it has an essential function which is probably not related to photosynthesis. This Lactuca sativa (Garden lettuce) protein is Protein Ycf2.